The sequence spans 626 residues: Miltiradiene synthase KSL1, chloroplastic (626 aa).

The transit peptide at 1-51 directs the protein to the chloroplast; that stretch reads MSLAFNLRVIPFSGHTIQSRRGLFPVHESPMITTKPFAAVKCSLTTSTDLM. The Mg(2+) site is built by Asp-329, Asp-333, Asn-473, and Glu-481. The short motif at 329–333 is the DDXXD motif element; it reads DDFFD.

The protein belongs to the terpene synthase family. Mg(2+) is required as a cofactor. Highly expressed in roots, and, at low levels, in stems and leaves.

The protein localises to the plastid. It localises to the chloroplast. The enzyme catalyses (+)-copalyl diphosphate = miltiradiene + diphosphate. It functions in the pathway secondary metabolite biosynthesis; terpenoid biosynthesis. Involved in the biosynthesis of ent-kaurene diterpenoids natural products such as oridonin, miltiradiene, eriocalyxin B and nezukol, known to exhibit antitumor, anti-inflammatory and antibacterial activities. Catalyzes the conversion of (+)-copalyl diphosphate ((+)-CPP) to miltiradiene. The protein is Miltiradiene synthase KSL1, chloroplastic of Isodon rubescens (Rabdosia rubescens).